Consider the following 535-residue polypeptide: Protein PyrBI (535 aa).

The aspartate carbamoyltransferase stretch occupies residues 1–341; it reads MENKFMGRSL…MIAGKIGDDY (341 aa). Residues 342-370 form a linker region; it reads KGPEPKSCERVEDEDYIVEVPINNSKESK. An aspartate carbamoyltransferase regulatory region region spans residues 371–535; sequence VETFSEGVRP…FKEIWGEKKN (165 aa). Zn(2+)-binding residues include Cys-488, Cys-493, Cys-517, and Cys-520.

This sequence in the N-terminal section; belongs to the aspartate/ornithine carbamoyltransferase superfamily. ATCase family. It in the C-terminal section; belongs to the PyrI family.

It carries out the reaction carbamoyl phosphate + L-aspartate = N-carbamoyl-L-aspartate + phosphate + H(+). Its pathway is pyrimidine metabolism; UMP biosynthesis via de novo pathway; (S)-dihydroorotate from bicarbonate: step 2/3. This is Protein PyrBI (pyrBI) from Treponema denticola (strain ATCC 35405 / DSM 14222 / CIP 103919 / JCM 8153 / KCTC 15104).